The chain runs to 183 residues: V-type ATP synthase subunit E (183 aa).

It belongs to the V-ATPase E subunit family.

Functionally, produces ATP from ADP in the presence of a proton gradient across the membrane. This Fusobacterium nucleatum subsp. nucleatum (strain ATCC 25586 / DSM 15643 / BCRC 10681 / CIP 101130 / JCM 8532 / KCTC 2640 / LMG 13131 / VPI 4355) protein is V-type ATP synthase subunit E.